A 100-amino-acid polypeptide reads, in one-letter code: Urease subunit gamma (100 aa).

It belongs to the urease gamma subunit family. Heterotrimer of UreA (gamma), UreB (beta) and UreC (alpha) subunits. Three heterotrimers associate to form the active enzyme.

It localises to the cytoplasm. The catalysed reaction is urea + 2 H2O + H(+) = hydrogencarbonate + 2 NH4(+). The protein operates within nitrogen metabolism; urea degradation; CO(2) and NH(3) from urea (urease route): step 1/1. The protein is Urease subunit gamma of Ruegeria pomeroyi (strain ATCC 700808 / DSM 15171 / DSS-3) (Silicibacter pomeroyi).